Here is a 126-residue protein sequence, read N- to C-terminus: Large ribosomal subunit protein bL19 (126 aa).

It belongs to the bacterial ribosomal protein bL19 family.

Functionally, this protein is located at the 30S-50S ribosomal subunit interface and may play a role in the structure and function of the aminoacyl-tRNA binding site. The chain is Large ribosomal subunit protein bL19 from Bordetella bronchiseptica (strain ATCC BAA-588 / NCTC 13252 / RB50) (Alcaligenes bronchisepticus).